We begin with the raw amino-acid sequence, 1111 residues long: Lon protease homolog, mitochondrial (1111 aa).

The N-terminal 21 residues, 1 to 21 (MLRSSRSRLVTRNILLRQFKN), are a transit peptide targeting the mitochondrion. 2 disordered regions span residues 85 to 177 (IQLK…AKQP) and 288 to 311 (PPTSEQNLKDESDVSKSEGVENNE). Over residues 88–125 (KQDDKGKDIDQPESENRKKEEEQVPTEEKDNDTAKESE) the composition is skewed to basic and acidic residues. Positions 126–135 (TSQQRDSVAE) are enriched in polar residues. The segment covering 145–167 (GASGNGESSGNGSGDDGNNGSGN) has biased composition (gly residues). The Lon N-terminal domain maps to 185 to 450 (VMALPISRRP…KALTVLKKEL (266 aa)). Residues 294 to 306 (NLKDESDVSKSEG) are compositionally biased toward basic and acidic residues. 602–609 (GPPGVGKT) lines the ATP pocket. Basic and acidic residues-rich tracts occupy residues 819–835 (ENEEVKDQKDIKVKQSE) and 853–865 (ELIKTQKSHDNKG). Residues 819–866 (ENEEVKDQKDIKVKQSENKSSAEASTVESTTEENELIKTQKSHDNKGS) are disordered. The Lon proteolytic domain maps to 899–1085 (STPPGVVMGL…EDVFQRLFGD (187 aa)). Residues Ser-991 and Lys-1034 contribute to the active site.

The protein belongs to the peptidase S16 family. As to quaternary structure, homohexamer or homoheptamer. Organized in a ring with a central cavity.

It localises to the mitochondrion matrix. It carries out the reaction Hydrolysis of proteins in presence of ATP.. Its function is as follows. ATP-dependent serine protease that mediates the selective degradation of misfolded, unassembled or oxidatively damaged polypeptides as well as certain short-lived regulatory proteins in the mitochondrial matrix. May also have a chaperone function in the assembly of inner membrane protein complexes. Participates in the regulation of mitochondrial gene expression and in the maintenance of the integrity of the mitochondrial genome. Binds to mitochondrial DNA in a site-specific manner. The polypeptide is Lon protease homolog, mitochondrial (Kluyveromyces lactis (strain ATCC 8585 / CBS 2359 / DSM 70799 / NBRC 1267 / NRRL Y-1140 / WM37) (Yeast)).